Consider the following 641-residue polypeptide: 1-deoxy-D-xylulose-5-phosphate synthase (641 aa).

Thiamine diphosphate contacts are provided by residues His79 and 120–122 (GHS). A Mg(2+)-binding site is contributed by Asp151. Residues 152–153 (GS), Asn180, Tyr290, and Glu372 contribute to the thiamine diphosphate site. Position 180 (Asn180) interacts with Mg(2+).

The protein belongs to the transketolase family. DXPS subfamily. Homodimer. Mg(2+) serves as cofactor. The cofactor is thiamine diphosphate.

The catalysed reaction is D-glyceraldehyde 3-phosphate + pyruvate + H(+) = 1-deoxy-D-xylulose 5-phosphate + CO2. Its pathway is metabolic intermediate biosynthesis; 1-deoxy-D-xylulose 5-phosphate biosynthesis; 1-deoxy-D-xylulose 5-phosphate from D-glyceraldehyde 3-phosphate and pyruvate: step 1/1. In terms of biological role, catalyzes the acyloin condensation reaction between C atoms 2 and 3 of pyruvate and glyceraldehyde 3-phosphate to yield 1-deoxy-D-xylulose-5-phosphate (DXP). This is 1-deoxy-D-xylulose-5-phosphate synthase from Rhodopseudomonas palustris (strain TIE-1).